A 372-amino-acid polypeptide reads, in one-letter code: Glutamate 5-kinase (372 aa).

Lys-6 provides a ligand contact to ATP. Residues Ser-46, Asp-133, and Asn-145 each contribute to the substrate site. Residues 165–166 (TD) and 207–213 (TGGMYTK) contribute to the ATP site. The 79-residue stretch at 272 to 350 (SGRLFIDEGA…HEIEKILGYK (79 aa)) folds into the PUA domain.

The protein belongs to the glutamate 5-kinase family.

It is found in the cytoplasm. The enzyme catalyses L-glutamate + ATP = L-glutamyl 5-phosphate + ADP. It participates in amino-acid biosynthesis; L-proline biosynthesis; L-glutamate 5-semialdehyde from L-glutamate: step 1/2. Its function is as follows. Catalyzes the transfer of a phosphate group to glutamate to form L-glutamate 5-phosphate. This is Glutamate 5-kinase from Thermoanaerobacter pseudethanolicus (strain ATCC 33223 / 39E) (Clostridium thermohydrosulfuricum).